The sequence spans 177 residues: uncharacterized protein (177 aa).

The region spanning 1–175 is the Macro domain; it reads MYKNPYGLEI…VFKSIFNSIL (175 aa).

This is an uncharacterized protein from Saccharolobus solfataricus (strain ATCC 35092 / DSM 1617 / JCM 11322 / P2) (Sulfolobus solfataricus).